The chain runs to 359 residues: Protein RecA (359 aa).

Residue 64–71 (GHESSGKT) coordinates ATP. The disordered stretch occupies residues 328–359 (NKYPNKDSNDSPKEGSKIKTKVNPAVTQDELI). A compositionally biased stretch (basic and acidic residues) spans 331–344 (PNKDSNDSPKEGSK).

The protein belongs to the RecA family.

It localises to the cytoplasm. Its function is as follows. Can catalyze the hydrolysis of ATP in the presence of single-stranded DNA, the ATP-dependent uptake of single-stranded DNA by duplex DNA, and the ATP-dependent hybridization of homologous single-stranded DNAs. It interacts with LexA causing its activation and leading to its autocatalytic cleavage. The polypeptide is Protein RecA (Francisella tularensis subsp. novicida (strain U112)).